Here is a 317-residue protein sequence, read N- to C-terminus: Melanocyte-stimulating hormone receptor (317 aa).

Residues 1 to 26 form a disordered region; it reads MPVQGSPRSLLGAVNSTPTATPHLRP. Residues 1 to 37 lie on the Extracellular side of the membrane; the sequence is MPVQGSPRSLLGAVNSTPTATPHLRPAANQTGPQCLE. Residue N29 is glycosylated (N-linked (GlcNAc...) asparagine). Residues 38–63 traverse the membrane as a helical segment; sequence VSIPDGLFLCLGLVSLVENTLVVAAI. Residues 64-72 lie on the Cytoplasmic side of the membrane; that stretch reads AKNRNLHSP. The helical transmembrane segment at 73–93 threads the bilayer; that stretch reads MYCFVCCLALSDLLVSVSSVL. At 94–118 the chain is on the extracellular side; that stretch reads ETAVLLLLGAGALAAQATVVQLLGN. A helical membrane pass occupies residues 119-140; it reads VIDVLLCSSMVSSLFFLGAIAM. Residues 141–163 are Cytoplasmic-facing; that stretch reads DRYISIFYALRYHSIVTLARARR. A helical transmembrane segment spans residues 164 to 183; sequence AIAAIWAASMLSSTLFIAYC. The Extracellular portion of the chain corresponds to 184–191; the sequence is DHTAALLC. The helical transmembrane segment at 192–211 threads the bilayer; sequence LVVFFLAMLVLMAVLYVHML. Over 212-240 the chain is Cytoplasmic; the sequence is TQACQHAQGIARLHKRQRPVQQGWGLKGA. Residues 241-266 form a helical membrane-spanning segment; sequence ATLAILLGVFFLCWGPFFLHLTLIAV. The Extracellular segment spans residues 267-279; the sequence is CPQHPTCSCIFKN. The chain crosses the membrane as a helical span at residues 280 to 300; it reads FRLFLALIVCNAIVDPLIYAF. Residues 301–317 are Cytoplasmic-facing; it reads RSQELCKTLKELLLFSW.

Belongs to the G-protein coupled receptor 1 family. Interacts with MGRN1, but does not undergo MGRN1-mediated ubiquitination; this interaction competes with GNAS-binding and thus inhibits agonist-induced cAMP production. Interacts with OPN3; the interaction results in a decrease in MC1R-mediated cAMP signaling and ultimately a decrease in melanin production in melanocytes.

The protein localises to the cell membrane. Receptor for MSH (alpha, beta and gamma) and ACTH. The activity of this receptor is mediated by G proteins which activate adenylate cyclase. Mediates melanogenesis, the production of eumelanin (black/brown) and phaeomelanin (red/yellow), via regulation of cAMP signaling in melanocytes. The protein is Melanocyte-stimulating hormone receptor (MC1R) of Hapalemur griseus (Gray gentle lemur).